Consider the following 208-residue polypeptide: Porimin (208 aa).

The first 26 residues, 1–26 (MGLGARGAWAALLLGTLQVLALLGAA), serve as a signal peptide directing secretion. The Extracellular segment spans residues 27-166 (HESAAMAASA…EAKKGSKFDT (140 aa)). Over residues 42–57 (GLPHNSSANSTETLQH) the composition is skewed to polar residues. A disordered region spans residues 42–125 (GLPHNSSANS…PKTTSVSQNT (84 aa)). Residues Asn46, Asn50, Asn64, Asn68, Asn83, Asn96, and Asn106 are each glycosylated (N-linked (GlcNAc...) asparagine). Positions 65–107 (ETSNSTVKPPTSVASDSSNTTVTTMKPTAASNTTTPGMVSTNM) are enriched in polar residues. The span at 108–122 (TSTTLKSTPKTTSVS) shows a compositional bias: low complexity. N-linked (GlcNAc...) asparagine glycans are attached at residues Asn124 and Asn138. Residues 167-187 (GSFVGGIVLTLGVLSILYIGC) traverse the membrane as a helical segment. At 188-208 (KMYYSRRGIRYRTIDEHDAII) the chain is on the cytoplasmic side.

The protein belongs to the CD164 family. In terms of tissue distribution, ubiquitous. Not expressed in ovary. Expressed in keratinocytes.

The protein localises to the membrane. In terms of biological role, implicated in oncotic cell death, characterized by cell swelling, organelle swelling, vacuolization and increased membrane permeability. In Homo sapiens (Human), this protein is Porimin (TMEM123).